Consider the following 92-residue polypeptide: Small ribosomal subunit protein bS18B (92 aa).

Belongs to the bacterial ribosomal protein bS18 family. As to quaternary structure, part of the 30S ribosomal subunit. Forms a tight heterodimer with protein bS6.

In terms of biological role, binds as a heterodimer with protein bS6 to the central domain of the 16S rRNA, where it helps stabilize the platform of the 30S subunit. This is Small ribosomal subunit protein bS18B from Cupriavidus pinatubonensis (strain JMP 134 / LMG 1197) (Cupriavidus necator (strain JMP 134)).